The chain runs to 146 residues: Deoxyuridine 5'-triphosphate nucleotidohydrolase (146 aa).

Substrate-binding positions include 65 to 67 (RSG), asparagine 78, and 82 to 84 (TID).

This sequence belongs to the dUTPase family. Mg(2+) is required as a cofactor.

The catalysed reaction is dUTP + H2O = dUMP + diphosphate + H(+). It functions in the pathway pyrimidine metabolism; dUMP biosynthesis; dUMP from dCTP (dUTP route): step 2/2. In terms of biological role, this enzyme is involved in nucleotide metabolism: it produces dUMP, the immediate precursor of thymidine nucleotides and it decreases the intracellular concentration of dUTP so that uracil cannot be incorporated into DNA. This is Deoxyuridine 5'-triphosphate nucleotidohydrolase from Treponema pallidum subsp. pallidum (strain SS14).